The primary structure comprises 233 residues: Glucosamine-6-phosphate deaminase (233 aa).

Residue Asp62 is the Proton acceptor; for enolization step of the active site. The active-site For ring-opening step is the Asn128. His130 serves as the catalytic Proton acceptor; for ring-opening step. Residue Glu135 is the For ring-opening step of the active site.

It belongs to the glucosamine/galactosamine-6-phosphate isomerase family. NagB subfamily.

The enzyme catalyses alpha-D-glucosamine 6-phosphate + H2O = beta-D-fructose 6-phosphate + NH4(+). The protein operates within amino-sugar metabolism; N-acetylneuraminate degradation; D-fructose 6-phosphate from N-acetylneuraminate: step 5/5. In terms of biological role, catalyzes the reversible isomerization-deamination of glucosamine 6-phosphate (GlcN6P) to form fructose 6-phosphate (Fru6P) and ammonium ion. This Leuconostoc citreum (strain KM20) protein is Glucosamine-6-phosphate deaminase.